A 468-amino-acid polypeptide reads, in one-letter code: Glutamate--tRNA ligase (468 aa).

The short motif at 12-22 is the 'HIGH' region element; that stretch reads PSPTGFIHLGN. Positions 244-248 match the 'KMSKS' region motif; it reads KMSKR. Lys247 provides a ligand contact to ATP.

This sequence belongs to the class-I aminoacyl-tRNA synthetase family. Glutamate--tRNA ligase type 1 subfamily. As to quaternary structure, monomer.

The protein localises to the cytoplasm. It carries out the reaction tRNA(Glu) + L-glutamate + ATP = L-glutamyl-tRNA(Glu) + AMP + diphosphate. Functionally, catalyzes the attachment of glutamate to tRNA(Glu) in a two-step reaction: glutamate is first activated by ATP to form Glu-AMP and then transferred to the acceptor end of tRNA(Glu). The chain is Glutamate--tRNA ligase from Polynucleobacter asymbioticus (strain DSM 18221 / CIP 109841 / QLW-P1DMWA-1) (Polynucleobacter necessarius subsp. asymbioticus).